A 184-amino-acid chain; its full sequence is Peptide deformylase (184 aa).

Positions 111 and 154 each coordinate Fe cation. Glu-155 is an active-site residue. His-158 serves as a coordination point for Fe cation.

The protein belongs to the polypeptide deformylase family. Requires Fe(2+) as cofactor.

It carries out the reaction N-terminal N-formyl-L-methionyl-[peptide] + H2O = N-terminal L-methionyl-[peptide] + formate. In terms of biological role, removes the formyl group from the N-terminal Met of newly synthesized proteins. Requires at least a dipeptide for an efficient rate of reaction. N-terminal L-methionine is a prerequisite for activity but the enzyme has broad specificity at other positions. The chain is Peptide deformylase from Lactobacillus gasseri (strain ATCC 33323 / DSM 20243 / BCRC 14619 / CIP 102991 / JCM 1131 / KCTC 3163 / NCIMB 11718 / NCTC 13722 / AM63).